The chain runs to 334 residues: GTP 3',8-cyclase (334 aa).

The region spanning 13–239 (RFQRKFYYLR…KARADNDGPA (227 aa)) is the Radical SAM core domain. Arg22 lines the GTP pocket. [4Fe-4S] cluster is bound by residues Cys29 and Cys33. Tyr35 is an S-adenosyl-L-methionine binding site. [4Fe-4S] cluster is bound at residue Cys36. Arg73 serves as a coordination point for GTP. Gly77 lines the S-adenosyl-L-methionine pocket. Thr104 lines the GTP pocket. S-adenosyl-L-methionine is bound at residue Ser128. Lys165 contributes to the GTP binding site. Met199 lines the S-adenosyl-L-methionine pocket. 2 residues coordinate [4Fe-4S] cluster: Cys262 and Cys265. 267–269 (RLR) contributes to the GTP binding site. Cys279 contacts [4Fe-4S] cluster.

This sequence belongs to the radical SAM superfamily. MoaA family. In terms of assembly, monomer and homodimer. [4Fe-4S] cluster serves as cofactor.

It catalyses the reaction GTP + AH2 + S-adenosyl-L-methionine = (8S)-3',8-cyclo-7,8-dihydroguanosine 5'-triphosphate + 5'-deoxyadenosine + L-methionine + A + H(+). Its pathway is cofactor biosynthesis; molybdopterin biosynthesis. In terms of biological role, catalyzes the cyclization of GTP to (8S)-3',8-cyclo-7,8-dihydroguanosine 5'-triphosphate. The protein is GTP 3',8-cyclase of Vibrio cholerae serotype O1 (strain M66-2).